The chain runs to 303 residues: Cyclin-dependent kinase 4 (303 aa).

An N-acetylalanine modification is found at Ala-2. The region spanning 6-295 is the Protein kinase domain; the sequence is YEPVAEIGVG…AFRALQHSYL (290 aa). Residues 12 to 20 and Lys-35 contribute to the ATP site; that span reads IGVGAYGTV. Residues 50-56 are required for binding D-type cyclins; sequence PVSTVRE. Asp-140 serves as the catalytic Proton acceptor. The residue at position 172 (Thr-172) is a Phosphothreonine; by CAK. The residue at position 300 (Ser-300) is a Phosphoserine.

This sequence belongs to the protein kinase superfamily. CMGC Ser/Thr protein kinase family. CDC2/CDKX subfamily. Component of the D-CDK4 complex, composed of CDK4 and some D-type G1 cyclin (CCND1, CCND2 or CCND3). Interacts directly in the complex with CCND1, CCND2 or CCND3. Interacts with SEI1 and ZNF655. Forms a ternary complex, cyclin D-CDK4-CDKN1B, involved in modulating CDK4 enzymatic activity. Interacts directly with CDKN1B (phosphorylated on 'Tyr-88' and 'Tyr-89'); the interaction allows assembly of the cyclin D-CDK4 complex, Thr-172 phosphorylation, nuclear translocation and enhances the cyclin D-CDK4 complex activity. CDK4 activity is either inhibited or enhanced depending on stoichiometry of complex. The non-tyrosine-phosphorylated form of CDKN1B prevents T-loop phosphorylation of CDK4 producing inactive CDK4. Interacts (unphosphorylated form) with CDK2. Also forms ternary complexes with CDKN1A or CDKN2A. Interacts directly with CDKN1A (via its N-terminal); the interaction promotes the assembly of the cyclin D-CDK4 complex, its nuclear translocation and promotes the cyclin D-dependent enzyme activity of CDK4. Interacts with CCND1; the interaction is prevented with the binding of CCND1 to INSM1 during cell cycle progression. Probably forms a complex composed of chaperones HSP90 and HSP70, co-chaperones CDC37, PPP5C, TSC1 and client protein TSC2, CDK4, AKT, RAF1 and NR3C1; this complex does not contain co-chaperones STIP1/HOP and PTGES3/p23. Interacts with CEBPA (when phosphorylated). Interacts with FNIP1 and FNIP2. Expressed in fetal and adult lung. Also expressed in brain, heart, liver, skeletal muscle and testes.

The protein resides in the cytoplasm. It localises to the nucleus. It is found in the nucleus membrane. It catalyses the reaction L-seryl-[protein] + ATP = O-phospho-L-seryl-[protein] + ADP + H(+). The enzyme catalyses L-threonyl-[protein] + ATP = O-phospho-L-threonyl-[protein] + ADP + H(+). Both phosphorylation at Thr-172 and binding of a D-type cyclin are necessary for enzymatic activity. Full activation of the cyclin-D-CDK4 complex appears to require other factors such as recruitment of the substrate via a substrate recruitment motif, and/or formation of the CDKN1B ternary complex. Inhibited by INK4 family members. In resting cells, the non-tyrosine-phosphorylated form of CDKN1B prevents phosphorylation at Thr-172 and inactivation, while, in proliferating cells, tyrosine phosphorylation of CDKN1B allows phosphorylation of Thr-172 of CDK4 and subsequent activation. In terms of biological role, ser/Thr-kinase component of cyclin D-CDK4 (DC) complexes that phosphorylate and inhibit members of the retinoblastoma (RB) protein family including RB1 and regulate the cell-cycle during G(1)/S transition. Phosphorylation of RB1 allows dissociation of the transcription factor E2F from the RB/E2F complexes and the subsequent transcription of E2F target genes which are responsible for the progression through the G(1) phase. Hypophosphorylates RB1 in early G(1) phase. Cyclin D-CDK4 complexes are major integrators of various mitogenenic and antimitogenic signals. Also phosphorylates SMAD3 in a cell-cycle-dependent manner and represses its transcriptional activity. Component of the ternary complex, cyclin D/CDK4/CDKN1B, required for nuclear translocation and activity of the cyclin D-CDK4 complex. This Rattus norvegicus (Rat) protein is Cyclin-dependent kinase 4 (Cdk4).